Here is a 254-residue protein sequence, read N- to C-terminus: Peptide methionine sulfoxide reductase A5 (254 aa).

The signal sequence occupies residues 1–26; sequence MARGSAAAAIAGVVWVLLLLVGVASG.

It belongs to the MsrA Met sulfoxide reductase family.

It catalyses the reaction L-methionyl-[protein] + [thioredoxin]-disulfide + H2O = L-methionyl-(S)-S-oxide-[protein] + [thioredoxin]-dithiol. The catalysed reaction is [thioredoxin]-disulfide + L-methionine + H2O = L-methionine (S)-S-oxide + [thioredoxin]-dithiol. Functionally, catalyzes the reduction of methionine sulfoxide (MetSO) to methionine in proteins. Plays a protective role against oxidative stress by restoring activity to proteins that have been inactivated by methionine oxidation. MSRA family specifically reduces the MetSO S-enantiomer. The chain is Peptide methionine sulfoxide reductase A5 (MSRA5) from Oryza sativa subsp. japonica (Rice).